Reading from the N-terminus, the 211-residue chain is N-(5'-phosphoribosyl)anthranilate isomerase (211 aa).

Belongs to the TrpF family.

It carries out the reaction N-(5-phospho-beta-D-ribosyl)anthranilate = 1-(2-carboxyphenylamino)-1-deoxy-D-ribulose 5-phosphate. The protein operates within amino-acid biosynthesis; L-tryptophan biosynthesis; L-tryptophan from chorismate: step 3/5. The polypeptide is N-(5'-phosphoribosyl)anthranilate isomerase (Methanococcus maripaludis (strain C6 / ATCC BAA-1332)).